The following is a 24-amino-acid chain: Brevinin-1Pe (24 aa).

Cys-18 and Cys-24 are oxidised to a cystine.

As to expression, expressed by the skin glands.

The protein localises to the secreted. Antibacterial activity against Gram-positive bacterium S.aureus and Gram-negative bacterium E.coli. Has activity against C.albicans. The chain is Brevinin-1Pe from Lithobates pipiens (Northern leopard frog).